A 406-amino-acid chain; its full sequence is Leucine aminopeptidase 1 (406 aa).

An N-terminal signal peptide occupies residues 1 to 18 (MKVTNASLLALLLPAVSG). Positions 19–94 (RFVETGEPDR…LRAMTASRKK (76 aa)) are excised as a propeptide. The N-linked (GlcNAc...) asparagine glycan is linked to asparagine 186. Zn(2+)-binding residues include histidine 194, aspartate 213, glutamate 252, and aspartate 279. An N-linked (GlcNAc...) asparagine glycan is attached at asparagine 306. A disulfide bond links cysteine 328 and cysteine 332. Histidine 361 serves as a coordination point for Zn(2+).

The protein belongs to the peptidase M28 family. M28E subfamily. In terms of assembly, monomer. Zn(2+) serves as cofactor.

The protein localises to the secreted. In terms of biological role, extracellular aminopeptidase that allows assimilation of proteinaceous substrates. The polypeptide is Leucine aminopeptidase 1 (LAP1) (Chaetomium globosum (strain ATCC 6205 / CBS 148.51 / DSM 1962 / NBRC 6347 / NRRL 1970) (Soil fungus)).